A 338-amino-acid chain; its full sequence is UbiA prenyltransferase domain-containing protein 1 (338 aa).

The segment at 1–39 (MAAVQAPGEKINIQAGETTQVGDTDQQRNDWPEEDRLPE) is disordered. Ala-2 is subject to N-acetylalanine. Positions 15–24 (AGETTQVGDT) are enriched in polar residues. Over residues 25-39 (DQQRNDWPEEDRLPE) the composition is skewed to basic and acidic residues. Transmembrane regions (helical) follow at residues 83-103 (LLLGCAVAVLAVHGAGNLVNT), 134-154 (FGVFLYTLGCVCAAYLYYLST), 160-180 (LALIYFGGLSGSFLYTGGIGF), 188-208 (LVILITFGPLAVMFAYAVQVG), 209-229 (SLAIFPLVYAIPLALSTEAIL), 245-267 (IVTLAILIGPTLSYILYNTLLFL), 277-297 (THCSISLALPLLTSPMAFSLE), and 315-335 (LNLLLGLFYVFGIILAPAGSL).

It belongs to the UbiA prenyltransferase family. As to quaternary structure, interacts with HMGCR and SOAT1.

The protein localises to the endoplasmic reticulum membrane. It localises to the golgi apparatus membrane. Its subcellular location is the mitochondrion membrane. The catalysed reaction is menadiol + (2E,6E,10E)-geranylgeranyl diphosphate = menaquinol-4 + diphosphate. It catalyses the reaction all-trans-decaprenyl diphosphate + 4-hydroxybenzoate = 4-hydroxy-3-(all-trans-decaprenyl)benzoate + diphosphate. It participates in quinol/quinone metabolism; menaquinone biosynthesis. The protein operates within cofactor biosynthesis; ubiquinone biosynthesis. Its function is as follows. Prenyltransferase that mediates the formation of menaquinone-4 (MK-4) and coenzyme Q10. MK-4 is a vitamin K2 isoform required for endothelial cell development. Mediates the conversion of phylloquinone (PK) into MK-4, probably by cleaving the side chain of phylloquinone (PK) to release 2-methyl-1,4-naphthoquinone (menadione; K3) and then prenylating it with geranylgeranyl pyrophosphate (GGPP) to form MK-4. Also plays a role in cardiovascular development independently of MK-4 biosynthesis, by acting as a coenzyme Q10 biosynthetic enzyme: coenzyme Q10, also named ubiquinone, plays an important antioxidant role in the cardiovascular system. Mediates biosynthesis of coenzyme Q10 in the Golgi membrane, leading to protect cardiovascular tissues from NOS3/eNOS-dependent oxidative stress. The chain is UbiA prenyltransferase domain-containing protein 1 (Ubiad1) from Rattus norvegicus (Rat).